The sequence spans 87 residues: Large ribosomal subunit protein bL27 (87 aa).

Positions 1–23 (MAHKKGTGSTRNGRDSNAQRLGV) are disordered. Positions 7–19 (TGSTRNGRDSNAQ) are enriched in polar residues.

It belongs to the bacterial ribosomal protein bL27 family.

This Synechocystis sp. (strain ATCC 27184 / PCC 6803 / Kazusa) protein is Large ribosomal subunit protein bL27 (rpmA).